The chain runs to 240 residues: Putative outer membrane protein RT0057 (240 aa).

Positions 1–20 are cleaved as a signal peptide; the sequence is MLKKLCVILFISSITINSHA.

This sequence belongs to the OmpW/AlkL family.

It is found in the cell outer membrane. The protein is Putative outer membrane protein RT0057 of Rickettsia typhi (strain ATCC VR-144 / Wilmington).